A 185-amino-acid chain; its full sequence is Probable chorismate pyruvate-lyase (185 aa).

Residues arginine 80, leucine 118, and glutamate 170 each coordinate substrate.

This sequence belongs to the UbiC family.

It is found in the cytoplasm. It carries out the reaction chorismate = 4-hydroxybenzoate + pyruvate. Its pathway is cofactor biosynthesis; ubiquinone biosynthesis. In terms of biological role, removes the pyruvyl group from chorismate, with concomitant aromatization of the ring, to provide 4-hydroxybenzoate (4HB) for the ubiquinone pathway. The polypeptide is Probable chorismate pyruvate-lyase (Pseudomonas putida (strain ATCC 47054 / DSM 6125 / CFBP 8728 / NCIMB 11950 / KT2440)).